Reading from the N-terminus, the 61-residue chain is Small ribosomal subunit protein uS14 (61 aa).

Cysteine 24, cysteine 27, cysteine 40, and cysteine 43 together coordinate Zn(2+).

Belongs to the universal ribosomal protein uS14 family. Zinc-binding uS14 subfamily. In terms of assembly, part of the 30S ribosomal subunit. Contacts proteins S3 and S10. The cofactor is Zn(2+).

Binds 16S rRNA, required for the assembly of 30S particles and may also be responsible for determining the conformation of the 16S rRNA at the A site. This is Small ribosomal subunit protein uS14 from Thermus thermophilus (strain ATCC BAA-163 / DSM 7039 / HB27).